The chain runs to 172 residues: MEIGQYQPNLEGDGLRIGIVQSRFNEPVCNGLADACVEELERLGVAGEDVLLVSVPGALEIPLALQKLAESGQFDALIALGAVIRGETYHFELVSNESGAGITRIALDFNVPIANAVLTTENDEQAVARMTEKGRDAARVAVEMANLTMALDQLGDDDEDEEEDEDDEEERA.

5-amino-6-(D-ribitylamino)uracil-binding positions include phenylalanine 24, 58–60 (ALE), and 82–84 (AVI). 87-88 (ET) serves as a coordination point for (2S)-2-hydroxy-3-oxobutyl phosphate. Residue histidine 90 is the Proton donor of the active site. 5-amino-6-(D-ribitylamino)uracil is bound at residue asparagine 115. Arginine 129 is a binding site for (2S)-2-hydroxy-3-oxobutyl phosphate. Positions 150–172 (ALDQLGDDDEDEEEDEDDEEERA) are disordered. Residues 154–172 (LGDDDEDEEEDEDDEEERA) are compositionally biased toward acidic residues.

The protein belongs to the DMRL synthase family.

It catalyses the reaction (2S)-2-hydroxy-3-oxobutyl phosphate + 5-amino-6-(D-ribitylamino)uracil = 6,7-dimethyl-8-(1-D-ribityl)lumazine + phosphate + 2 H2O + H(+). The protein operates within cofactor biosynthesis; riboflavin biosynthesis; riboflavin from 2-hydroxy-3-oxobutyl phosphate and 5-amino-6-(D-ribitylamino)uracil: step 1/2. Its function is as follows. Catalyzes the formation of 6,7-dimethyl-8-ribityllumazine by condensation of 5-amino-6-(D-ribitylamino)uracil with 3,4-dihydroxy-2-butanone 4-phosphate. This is the penultimate step in the biosynthesis of riboflavin. The polypeptide is 6,7-dimethyl-8-ribityllumazine synthase (Burkholderia multivorans (strain ATCC 17616 / 249)).